A 382-amino-acid polypeptide reads, in one-letter code: Proton extrusion protein PxcA (382 aa).

4 helical membrane passes run 156-176, 257-277, 305-325, and 340-360; these read TLIS…VQQV, AVKN…VCLF, IILF…TVLL, and FILL…KYWI.

The protein belongs to the CemA family.

The protein resides in the cell inner membrane. In terms of biological role, required for H(+) efflux immediately after light irradiation to form a rapid H(+) concentration gradient across the thylakoid membranes. Together with PxcL, contributes to transient H(+) uptake following dark to light transition. In Synechococcus sp. (strain CC9311), this protein is Proton extrusion protein PxcA.